The chain runs to 100 residues: Transcription and mRNA export factor SUS1 (100 aa).

The protein belongs to the ENY2 family. Component of the nuclear pore complex (NPC)-associated TREX-2 complex (transcription and export complex 2), composed of at least SUS1, SAC3, THP1, SEM1, and CDC31. TREX-2 contains 2 SUS1 chains. The TREX-2 complex interacts with the nucleoporin NUP1. Component of the 1.8 MDa SAGA transcription coactivator-HAT complex. SAGA is built of 5 distinct domains with specialized functions. Within the SAGA complex, SUS1, SGF11, SGF73 and UBP8 form an additional subcomplex of SAGA called the DUB module (deubiquitination module). Interacts directly with THP1, SAC3, SGF11, and with the RNA polymerase II.

The protein resides in the nucleus. The protein localises to the nucleoplasm. It localises to the cytoplasm. Its subcellular location is the P-body. In terms of biological role, involved in mRNA export coupled transcription activation by association with both the TREX-2 and the SAGA complexes. At the promoters, SAGA is required for recruitment of the basal transcription machinery. It influences RNA polymerase II transcriptional activity through different activities such as TBP interaction and promoter selectivity, interaction with transcription activators, and chromatin modification through histone acetylation and deubiquitination. Within the SAGA complex, participates in a subcomplex required for deubiquitination of H2B and for the maintenance of steady-state H3 methylation levels. The TREX-2 complex functions in docking export-competent ribonucleoprotein particles (mRNPs) to the nuclear entrance of the nuclear pore complex (nuclear basket). TREX-2 participates in mRNA export and accurate chromatin positioning in the nucleus by tethering genes to the nuclear periphery. May also be involved in cytoplasmic mRNA decay by interaction with components of P-bodies. The chain is Transcription and mRNA export factor SUS1 from Candida glabrata (strain ATCC 2001 / BCRC 20586 / JCM 3761 / NBRC 0622 / NRRL Y-65 / CBS 138) (Yeast).